Consider the following 367-residue polypeptide: ADP-ribosylhydrolase ARH3 (367 aa).

Glu-41, Thr-79, Asp-80, and Asp-81 together coordinate Mg(2+). Asp-80 is a substrate binding site. Substrate-binding positions include 149-155, His-185, Leu-238, and Ile-274; that span reads KGSYGNG. Residues Asp-317 and Thr-320 each contribute to the Mg(2+) site.

The protein belongs to the ADP-ribosylglycohydrolase family. Monomer. The cofactor is Mg(2+).

It localises to the nucleus. The protein resides in the cytoplasm. Its subcellular location is the chromosome. It is found in the mitochondrion matrix. The enzyme catalyses [(1''-&gt;2')-ADP-alpha-D-ribose](n) + H2O = [(1''-&gt;2')-ADP-alpha-D-ribose](n-1) + ADP-D-ribose. It catalyses the reaction 1''-O-acetyl-ADP-alpha-D-ribose + H2O = ADP-D-ribose + acetate + H(+). The catalysed reaction is O-(ADP-D-ribosyl)-L-seryl-[protein] + H2O = ADP-D-ribose + L-seryl-[protein]. It carries out the reaction alpha-NAD(+) + H2O = ADP-D-ribose + nicotinamide + H(+). With respect to regulation, the protein undergoes a dramatic conformational switch from closed to open states upon substrate-binding, which enables specific substrate recognition for the 1''-O-linkage. The glutamate flap (Glu-41) blocks substrate entrance to Mg(2+) in the unliganded closed state. In presence of substrate, Glu-41 is ejected from the active site: this closed-to-open transition significantly widens the substrate-binding channel and precisely positions the scissile 1''-O-linkage for cleavage while securing tightly 2'- and 3'-hydroxyls of ADP-ribose. Functionally, ADP-ribosylhydrolase that preferentially hydrolyzes the scissile alpha-O-linkage attached to the anomeric C1'' position of ADP-ribose and acts on different substrates, such as proteins ADP-ribosylated on serine and threonine, free poly(ADP-ribose) and O-acetyl-ADP-D-ribose. Specifically acts as a serine mono-ADP-ribosylhydrolase by mediating the removal of mono-ADP-ribose attached to serine residues on proteins, thereby playing a key role in DNA damage response. Serine ADP-ribosylation of proteins constitutes the primary form of ADP-ribosylation of proteins in response to DNA damage. Does not hydrolyze ADP-ribosyl-arginine, -cysteine, -diphthamide, or -asparagine bonds. Also able to degrade protein free poly(ADP-ribose), which is synthesized in response to DNA damage: free poly(ADP-ribose) acts as a potent cell death signal and its degradation by ADPRHL2 protects cells from poly(ADP-ribose)-dependent cell death, a process named parthanatos. Also hydrolyzes free poly(ADP-ribose) in mitochondria. Specifically digests O-acetyl-ADP-D-ribose, a product of deacetylation reactions catalyzed by sirtuins. Specifically degrades 1''-O-acetyl-ADP-D-ribose isomer, rather than 2''-O-acetyl-ADP-D-ribose or 3''-O-acetyl-ADP-D-ribose isomers. This is ADP-ribosylhydrolase ARH3 (ADPRS) from Gallus gallus (Chicken).